The sequence spans 210 residues: Urease accessory protein UreF (210 aa).

Belongs to the UreF family. In terms of assembly, ureD, UreF and UreG form a complex that acts as a GTP-hydrolysis-dependent molecular chaperone, activating the urease apoprotein by helping to assemble the nickel containing metallocenter of UreC. The UreE protein probably delivers the nickel.

The protein localises to the cytoplasm. In terms of biological role, required for maturation of urease via the functional incorporation of the urease nickel metallocenter. This is Urease accessory protein UreF from Cereibacter sphaeroides (strain KD131 / KCTC 12085) (Rhodobacter sphaeroides).